The primary structure comprises 106 residues: Iron-sulfur cluster assembly protein CyaY (106 aa).

Belongs to the frataxin family.

In terms of biological role, involved in iron-sulfur (Fe-S) cluster assembly. May act as a regulator of Fe-S biogenesis. The chain is Iron-sulfur cluster assembly protein CyaY from Salmonella heidelberg (strain SL476).